A 123-amino-acid chain; its full sequence is MLHTANPVIKHKAGLLNLAEELSNVSKACKIMGVSRDTFYRYRELVAEGGVDAQINRSRRAPNLKNRTDEATEQAVVDYAVAFPTHGQHRASNELRKQGVFISDSGVRSVWLLHNLENLKRRY.

This is an uncharacterized protein from Escherichia coli O157:H7.